Reading from the N-terminus, the 473-residue chain is Mannose-1-phosphate guanylyltransferase (473 aa).

It belongs to the mannose-6-phosphate isomerase type 2 family. In terms of assembly, homodimer.

The enzyme catalyses alpha-D-mannose 1-phosphate + GTP + H(+) = GDP-alpha-D-mannose + diphosphate. Its pathway is nucleotide-sugar biosynthesis; GDP-alpha-D-mannose biosynthesis; GDP-alpha-D-mannose from alpha-D-mannose 1-phosphate (GTP route): step 1/1. The protein operates within bacterial outer membrane biogenesis; LPS O-antigen biosynthesis. Its function is as follows. Involved in GDP-mannose biosynthesis which serves as the activated sugar nucleotide precursor for mannose residues in cell surface polysaccharides. This enzyme participates in synthesis of the LPS group C2 O antigen. The polypeptide is Mannose-1-phosphate guanylyltransferase (rfbM) (Salmonella muenchen).